A 241-amino-acid chain; its full sequence is tRNA pseudouridine synthase A (241 aa).

Catalysis depends on D51, which acts as the Nucleophile. Y110 serves as a coordination point for substrate.

The protein belongs to the tRNA pseudouridine synthase TruA family. As to quaternary structure, homodimer.

It carries out the reaction uridine(38/39/40) in tRNA = pseudouridine(38/39/40) in tRNA. Its function is as follows. Formation of pseudouridine at positions 38, 39 and 40 in the anticodon stem and loop of transfer RNAs. The chain is tRNA pseudouridine synthase A from Campylobacter jejuni subsp. jejuni serotype O:23/36 (strain 81-176).